The primary structure comprises 323 residues: Ribokinase (323 aa).

Residues 26–28 (MTD), 54–58 (GKGAN), and Glu-155 each bind substrate. Residues Asn-200, 236–241 (TLGASG), and Thr-257 each bind ATP. Asp-264 and Thr-266 together coordinate K(+). Residues 269 to 270 (GD) and Asn-296 each bind ATP. Asp-270 provides a ligand contact to substrate. Asp-270 serves as the catalytic Proton acceptor. 4 residues coordinate K(+): Ser-302, Ala-305, Gly-307, and Ser-311.

Belongs to the carbohydrate kinase PfkB family. Ribokinase subfamily. As to quaternary structure, homodimer. It depends on Mg(2+) as a cofactor.

The protein resides in the cytoplasm. The protein localises to the nucleus. It catalyses the reaction D-ribose + ATP = D-ribose 5-phosphate + ADP + H(+). It functions in the pathway carbohydrate metabolism; D-ribose degradation; D-ribose 5-phosphate from beta-D-ribopyranose: step 2/2. With respect to regulation, activated by a monovalent cation that binds near, but not in, the active site. The most likely occupant of the site in vivo is potassium. Ion binding induces a conformational change that may alter substrate affinity. Competitively inhibited by phosphonoacetic acid, etidronate, 2-carboxethylphosphonic acid, N-(phosphonomethyl)glycine, N-(phosphonomethyl)iminodiacetic acid and clodronate. Functionally, catalyzes the phosphorylation of ribose at O-5 in a reaction requiring ATP and magnesium. The resulting D-ribose-5-phosphate can then be used either for sythesis of nucleotides, histidine, and tryptophan, or as a component of the pentose phosphate pathway. The protein is Ribokinase of Mus musculus (Mouse).